A 291-amino-acid polypeptide reads, in one-letter code: ATP synthase subunit a (291 aa).

5 helical membrane passes run 47–67 (FTNL…LVFV), 140–160 (HFLI…IVGF), 167–187 (FFSF…LVLL), 207–227 (MMAG…MLFL), and 230–250 (IFYF…TGLE).

This sequence belongs to the ATPase A chain family. In terms of assembly, F-type ATPases have 2 components, CF(1) - the catalytic core - and CF(0) - the membrane proton channel. CF(1) has five subunits: alpha(3), beta(3), gamma(1), delta(1), epsilon(1). CF(0) has three main subunits: a, b and c.

The protein localises to the mitochondrion inner membrane. Its function is as follows. Mitochondrial membrane ATP synthase (F(1)F(0) ATP synthase or Complex V) produces ATP from ADP in the presence of a proton gradient across the membrane which is generated by electron transport complexes of the respiratory chain. F-type ATPases consist of two structural domains, F(1) - containing the extramembraneous catalytic core and F(0) - containing the membrane proton channel, linked together by a central stalk and a peripheral stalk. During catalysis, ATP synthesis in the catalytic domain of F(1) is coupled via a rotary mechanism of the central stalk subunits to proton translocation. Key component of the proton channel; it may play a direct role in the translocation of protons across the membrane. The polypeptide is ATP synthase subunit a (ATP6) (Zea mays (Maize)).